Consider the following 270-residue polypeptide: MNKNKKGFKLFFIFPVIAFGLGTWQVYRYDWKKRLIQRAKDRMEEDPIELSNSFIKNFKGSSFGDLNKYEFRRVYLNGKVIDNQYVLLGPRSIDGTLGYYVISPLQLSDGTRILLNRGWSASTPKSNYKIPYAIEELKLIHQKEKEQGQQQGNQESILYRYFNILGVISKTKERGSAFTPTNQPEKGQWYSLDVDAMADQLNTEPLMINTMDETEINSKPSSLPNPQFKRFDNDVESSFHNKHMSYIGTWYTLSASLFFIYFRYMRKLPK.

Helical transmembrane passes span 7-29 (GFKL…VYRY) and 246-265 (YIGT…FRYM).

Belongs to the SURF1 family.

Its subcellular location is the mitochondrion inner membrane. Its function is as follows. Probably involved in the biogenesis of the COX complex. This Dictyostelium discoideum (Social amoeba) protein is SURF1-like protein (surf1-1).